Consider the following 423-residue polypeptide: 3-phosphoshikimate 1-carboxyvinyltransferase (423 aa).

3-phosphoshikimate is bound by residues Lys-20, Ser-21, and Arg-25. Position 20 (Lys-20) interacts with phosphoenolpyruvate. Positions 91 and 119 each coordinate phosphoenolpyruvate. Residues Thr-163, Ser-164, Gln-165, Asp-305, Gln-328, and Lys-332 each contribute to the 3-phosphoshikimate site. Gln-165 is a binding site for phosphoenolpyruvate. Asp-305 functions as the Proton acceptor in the catalytic mechanism. The phosphoenolpyruvate site is built by Arg-336 and Arg-377.

This sequence belongs to the EPSP synthase family. In terms of assembly, monomer.

It localises to the cytoplasm. The enzyme catalyses 3-phosphoshikimate + phosphoenolpyruvate = 5-O-(1-carboxyvinyl)-3-phosphoshikimate + phosphate. It participates in metabolic intermediate biosynthesis; chorismate biosynthesis; chorismate from D-erythrose 4-phosphate and phosphoenolpyruvate: step 6/7. In terms of biological role, catalyzes the transfer of the enolpyruvyl moiety of phosphoenolpyruvate (PEP) to the 5-hydroxyl of shikimate-3-phosphate (S3P) to produce enolpyruvyl shikimate-3-phosphate and inorganic phosphate. In Acetivibrio thermocellus (strain ATCC 27405 / DSM 1237 / JCM 9322 / NBRC 103400 / NCIMB 10682 / NRRL B-4536 / VPI 7372) (Clostridium thermocellum), this protein is 3-phosphoshikimate 1-carboxyvinyltransferase.